The chain runs to 220 residues: MAKNKFNTAWLHDHINDPYVKMAQREGYRARAAYKLKEIDEQDKLIRAGQVIVDLGSTPGSWSQYARNKLAKGAQRDAEREGGIDGTIIALDLLPMEPIADVHFIQGDFREDSVIAQLEELVGERQVDLVISDMAPNLSGVAVADAARIEHLCDLALEFSQNHLKPDGALLVKCFHGSGYSQIVEKFKRQFRVVAARKPKASRDKSSETFILGKHLKRPA.

Residues Gly-60, Trp-62, Asp-92, Asp-108, and Asp-133 each coordinate S-adenosyl-L-methionine. Catalysis depends on Lys-173, which acts as the Proton acceptor.

This sequence belongs to the class I-like SAM-binding methyltransferase superfamily. RNA methyltransferase RlmE family.

The protein resides in the cytoplasm. The enzyme catalyses uridine(2552) in 23S rRNA + S-adenosyl-L-methionine = 2'-O-methyluridine(2552) in 23S rRNA + S-adenosyl-L-homocysteine + H(+). Functionally, specifically methylates the uridine in position 2552 of 23S rRNA at the 2'-O position of the ribose in the fully assembled 50S ribosomal subunit. This Paraburkholderia xenovorans (strain LB400) protein is Ribosomal RNA large subunit methyltransferase E.